Reading from the N-terminus, the 310-residue chain is tRNA dimethylallyltransferase (310 aa).

10 to 17 contributes to the ATP binding site; the sequence is GPTAVGKS. 12-17 provides a ligand contact to substrate; that stretch reads TAVGKS. Interaction with substrate tRNA regions lie at residues 35-38, 159-163, and 274-281; these read DSAQ, QRIQR, and KRQITWLR.

It belongs to the IPP transferase family. Monomer. Mg(2+) is required as a cofactor.

The catalysed reaction is adenosine(37) in tRNA + dimethylallyl diphosphate = N(6)-dimethylallyladenosine(37) in tRNA + diphosphate. Its function is as follows. Catalyzes the transfer of a dimethylallyl group onto the adenine at position 37 in tRNAs that read codons beginning with uridine, leading to the formation of N6-(dimethylallyl)adenosine (i(6)A). The polypeptide is tRNA dimethylallyltransferase (Halorhodospira halophila (strain DSM 244 / SL1) (Ectothiorhodospira halophila (strain DSM 244 / SL1))).